We begin with the raw amino-acid sequence, 410 residues long: Elongation factor Tu, chloroplastic (410 aa).

The tr-type G domain maps to 10-215 (KPHVNIGTIG…AVDQYIPTPK (206 aa)). Positions 19-26 (GHVDHGKT) are G1. Residue 19 to 26 (GHVDHGKT) participates in GTP binding. Thr-26 provides a ligand contact to Mg(2+). Residues 61-65 (GITIN) are G2. Residues 82–85 (DCPG) form a G3 region. GTP contacts are provided by residues 82–86 (DCPGH) and 137–140 (NKQD). Residues 137 to 140 (NKQD) are G4. Positions 175–177 (SAL) are G5.

The protein belongs to the TRAFAC class translation factor GTPase superfamily. Classic translation factor GTPase family. EF-Tu/EF-1A subfamily.

It is found in the plastid. The protein resides in the chloroplast. It carries out the reaction GTP + H2O = GDP + phosphate + H(+). In terms of biological role, GTP hydrolase that promotes the GTP-dependent binding of aminoacyl-tRNA to the A-site of ribosomes during protein biosynthesis. The protein is Elongation factor Tu, chloroplastic (tufA) of Nephroselmis olivacea (Green alga).